A 122-amino-acid chain; its full sequence is MKAGRYEYRWADGTTMVSAPEYVELLMNWIETQIDNEHIFPKKTGEPFPPNFEDFVKRILRKLFRVYAHIYHSHFPKIVTLNEQAHLNTCFHRYLLFVSEFQLVDKEEMVPIQKLVETILKP.

Positions 69 and 74 each coordinate Zn(2+).

This sequence belongs to the MOB1/phocein family.

It is found in the nucleus. The protein resides in the cytoplasm. Its subcellular location is the cytoskeleton. It localises to the phragmoplast. The sequence is that of Putative MOB kinase activator-like 2B from Arabidopsis thaliana (Mouse-ear cress).